The sequence spans 430 residues: Histidine--tRNA ligase (430 aa).

Belongs to the class-II aminoacyl-tRNA synthetase family. As to quaternary structure, homodimer.

The protein resides in the cytoplasm. The enzyme catalyses tRNA(His) + L-histidine + ATP = L-histidyl-tRNA(His) + AMP + diphosphate + H(+). The polypeptide is Histidine--tRNA ligase (Acaryochloris marina (strain MBIC 11017)).